The primary structure comprises 156 residues: SPbeta prophage-derived uncharacterized protein YorH (156 aa).

This Bacillus subtilis (strain 168) protein is SPbeta prophage-derived uncharacterized protein YorH (yorH).